Consider the following 360-residue polypeptide: Peptide chain release factor 1 (360 aa).

Glutamine 236 carries the post-translational modification N5-methylglutamine. Positions 288-308 (QDEQDAERKSTIGTGDRSERI) are disordered. A compositionally biased stretch (basic and acidic residues) spans 293 to 308 (AERKSTIGTGDRSERI).

It belongs to the prokaryotic/mitochondrial release factor family. Methylated by PrmC. Methylation increases the termination efficiency of RF1.

It localises to the cytoplasm. Peptide chain release factor 1 directs the termination of translation in response to the peptide chain termination codons UAG and UAA. This is Peptide chain release factor 1 from Streptococcus equi subsp. zooepidemicus (strain H70).